The sequence spans 1196 residues: Beta/alpha-amylase (1196 aa).

The first 35 residues, 1 to 35, serve as a signal peptide directing secretion; sequence MTLYRSLWKKGCMLLLSLVLSLTAFIGSPSNTASA. Residues 36 to 454 are beta-amylase; that stretch reads AVADDFQASV…IISKAKPDNN (419 aa). Aspartate 76 contacts substrate. Positions 83 and 87 each coordinate Ca(2+). Substrate-binding residues include histidine 116 and aspartate 124. An intrachain disulfide couples cysteine 118 to cysteine 126. Position 170 (glutamate 170) interacts with Ca(2+). Catalysis depends on glutamate 198, which acts as the Proton donor. 3 residues coordinate substrate: lysine 314, histidine 319, and threonine 357. Catalysis depends on glutamate 394, which acts as the Proton acceptor. Residues 395–396 and arginine 423 contribute to the substrate site; that span reads NA. 2 repeats span residues 455 to 558 and 565 to 668; these read GGTG…APAG and GGTT…APSG. Positions 544-553 are enriched in polar residues; it reads NSGNAGTITS. Residues 544–566 form a disordered region; it reads NSGNAGTITSGAPAGANPGDGGG. Residues 669 to 1196 form an alpha-amylase region; it reads SVLSVVTSTY…APKEVKVFTK (528 aa).

This sequence in the N-terminal section; belongs to the glycosyl hydrolase 14 family. It in the C-terminal section; belongs to the glycosyl hydrolase 13 family. Ca(2+) serves as cofactor.

It localises to the secreted. The enzyme catalyses Hydrolysis of (1-&gt;4)-alpha-D-glucosidic linkages in polysaccharides so as to remove successive maltose units from the non-reducing ends of the chains.. It catalyses the reaction Endohydrolysis of (1-&gt;4)-alpha-D-glucosidic linkages in polysaccharides containing three or more (1-&gt;4)-alpha-linked D-glucose units.. In terms of biological role, the precursor protein is proteolytically cleaved to produce multiform beta-amylases and a 48 kDa alpha-amylase after secretion. This Paenibacillus polymyxa (Bacillus polymyxa) protein is Beta/alpha-amylase.